Reading from the N-terminus, the 822-residue chain is uncharacterized protein (822 aa).

The Cytoplasmic portion of the chain corresponds to 1-13; sequence MCHNSVRSGNKAG. The helical transmembrane segment at 14–34 threads the bilayer; it reads FLGIKFGSALLSIATGAIAIA. Residues 35–44 lie on the Extracellular side of the membrane; it reads LLCKFHDHEA. The helical transmembrane segment at 45 to 65 threads the bilayer; the sequence is VLIVIVCSTLLYGIPSLISFI. The Cytoplasmic segment spans residues 66–76; the sequence is TETVFAPSKFH. Residues 77-97 form a helical membrane-spanning segment; that stretch reads IGYFYNVLNFALPLITMGCTV. Residues 98–120 are Extracellular-facing; the sequence is DYFHNTLRSPISVQSESHRVYIT. The helical transmembrane segment at 121-141 threads the bilayer; it reads TLDSLLIFTLFINGIQLGFFL. At 142 to 822 the chain is on the cytoplasmic side; sequence KDGNANNFGS…PVEELVSPSK (681 aa). Positions 271-290 are disordered; that stretch reads RNTQQATKVPTEKKSNHRSS. Ser-690 carries the post-translational modification Phosphoserine. Residues 698-712 show a composition bias toward polar residues; sequence TLQSSHSPTKSTSGN. Disordered regions lie at residues 698–728 and 751–783; these read TLQS…STVN and NGEE…GYPE. Residues 761–776 show a composition bias toward low complexity; the sequence is QSIQSSSSGSEQESAG.

Its subcellular location is the membrane. This is an uncharacterized protein from Saccharomyces cerevisiae (strain ATCC 204508 / S288c) (Baker's yeast).